A 742-amino-acid chain; its full sequence is 5-methyltetrahydropteroyltriglutamate--homocysteine methyltransferase (742 aa).

Residues 18-21 and Lys112 each bind 5-methyltetrahydropteroyltri-L-glutamate; that span reads REWK. L-homocysteine contacts are provided by residues 420–422 and Glu473; that span reads IGS. Residues 420–422 and Glu473 each bind L-methionine; that span reads IGS. Trp550 serves as a coordination point for 5-methyltetrahydropteroyltri-L-glutamate. Position 588 (Asp588) interacts with L-homocysteine. Asp588 is a binding site for L-methionine. Glu594 lines the 5-methyltetrahydropteroyltri-L-glutamate pocket. Zn(2+)-binding residues include His630, Cys632, and Glu654. His683 acts as the Proton donor in catalysis. Cys715 serves as a coordination point for Zn(2+).

This sequence belongs to the vitamin-B12 independent methionine synthase family. Zn(2+) is required as a cofactor.

It catalyses the reaction 5-methyltetrahydropteroyltri-L-glutamate + L-homocysteine = tetrahydropteroyltri-L-glutamate + L-methionine. The protein operates within amino-acid biosynthesis; L-methionine biosynthesis via de novo pathway; L-methionine from L-homocysteine (MetE route): step 1/1. Functionally, catalyzes the transfer of a methyl group from 5-methyltetrahydrofolate to homocysteine resulting in methionine formation. The sequence is that of 5-methyltetrahydropteroyltriglutamate--homocysteine methyltransferase from Staphylococcus aureus (strain JH9).